Reading from the N-terminus, the 634-residue chain is CRISPR-associated protein MJ1674 (634 aa).

CRISPR (clustered regularly interspaced short palindromic repeat) is an adaptive immune system that provides protection against mobile genetic elements (viruses, transposable elements and conjugative plasmids). CRISPR clusters contain spacers, sequences complementary to antecedent mobile elements, and target invading nucleic acids. CRISPR clusters are transcribed and processed into CRISPR RNA (crRNA). The type III Csm effector complex binds crRNA and acts as a crRNA-guided RNase, DNase and cyclic oligoadenylate synthase; binding of target RNA cognate to the crRNA is required for all activities. The chain is CRISPR-associated protein MJ1674 from Methanocaldococcus jannaschii (strain ATCC 43067 / DSM 2661 / JAL-1 / JCM 10045 / NBRC 100440) (Methanococcus jannaschii).